We begin with the raw amino-acid sequence, 149 residues long: YbbR-like domain-containing protein in def 5'region (149 aa).

One can recognise a YbbR-like domain in the interval 1-68 (IPVEVLAQGA…LRPNRVRVVE (68 aa)).

In Thermus thermophilus, this protein is YbbR-like domain-containing protein in def 5'region.